A 395-amino-acid chain; its full sequence is THP3 homolog C2A9.11c (395 aa).

The interval 91-127 is disordered; the sequence is LLSEEDEVDKKEKRRRRFENGSRSQNNAKSEELKVNP. One can recognise a PCI domain in the interval 218 to 384; sequence DVGEYNQCQT…STDRFEKCMK (167 aa).

It belongs to the THP3 family.

The protein resides in the cytoplasm. Its subcellular location is the nucleus. In terms of biological role, required for transcription elongation. May also be involved in pre-mRNA splicing. The polypeptide is THP3 homolog C2A9.11c (Schizosaccharomyces pombe (strain 972 / ATCC 24843) (Fission yeast)).